The sequence spans 175 residues: Adenine phosphoribosyltransferase (175 aa).

The protein belongs to the purine/pyrimidine phosphoribosyltransferase family. Homodimer.

It localises to the cytoplasm. The catalysed reaction is AMP + diphosphate = 5-phospho-alpha-D-ribose 1-diphosphate + adenine. It participates in purine metabolism; AMP biosynthesis via salvage pathway; AMP from adenine: step 1/1. In terms of biological role, catalyzes a salvage reaction resulting in the formation of AMP, that is energically less costly than de novo synthesis. This is Adenine phosphoribosyltransferase from Caldicellulosiruptor bescii (strain ATCC BAA-1888 / DSM 6725 / KCTC 15123 / Z-1320) (Anaerocellum thermophilum).